The sequence spans 1263 residues: Condensin complex subunit dpy-26 (1263 aa).

The span at 1 to 10 shows a compositional bias: polar residues; the sequence is MDVPSSSNVT. The interval 1–29 is disordered; that stretch reads MDVPSSSNVTGRRKRQVLDDDEDDGFRST. The stretch at 691-725 forms a coiled coil; that stretch reads NEQMDETEVEERNEQDVQRELEDIALAADEVAELM. Disordered stretches follow at residues 1098–1118 and 1225–1263; these read YQAA…GTAN and FSNL…EMEE. Residues 1106–1118 are compositionally biased toward polar residues; the sequence is NNQPTTSTYGTAN. Residues 1230 to 1241 are compositionally biased toward basic residues; that stretch reads RRPKAVPVRKGR.

Component of the condensin I complex, which contains the mix-1/SMC2 and smc-4/SMC4 heterodimer, and three non SMC subunits that probably regulate the complex: dpy-26, capg-1 and dpy-28. Within the complex, interacts with dpy-28, mix-1, smc-4 and capg-1. Component of the dosage compensation complex, which consists of the condensin I-like components mix-1/SMC2 and dpy-27/SMC4, and the three non SMC subunits dpy-26, capg-1 and dpy-28. Within the complex, interacts with dpy-27, dpy-28, mix-1 and capg-1. The interaction with dpy-27 is required for dpy-27 protein stability. Interacts with smcl-1. In terms of tissue distribution, expressed in embryos and in somatic and germline tissues in L4 stage larvae (at protein level).

The protein localises to the nucleus. It localises to the chromosome. Its function is as follows. Required for both chromosome condensation and segregation and for X-chromosome dosage compensation depending on its binding partners. Member of the condensin I complex, a complex required for conversion of interphase chromatin into mitotic-like condense chromosomes and for proper chromosome segregation in mitosis and meiosis. As a member of the condensin I complex, further controls the crossover number and distribution in meiosis by restricting double strand break formation, probably by influencing higher-order chromosome structure. Plays a role in robust cytokinesis upon presence of chromatin obstructions. Also a member of the condensin I-like dosage compensation complex that associates specifically with hermaphrodite X chromosomes to reduce their gene transcription during interphase, possibly through chromatin reorganization. As a member of the dosage compensation complex, also binds to regulatory regions of the autosomal her-1 gene, required for male development, possibly contributing to its repression in hermaphrodites. In Caenorhabditis elegans, this protein is Condensin complex subunit dpy-26.